A 298-amino-acid chain; its full sequence is Cytosolic Fe-S cluster assembly factor CFD1 (298 aa).

25–32 (GKGGVGKS) lines the ATP pocket. [4Fe-4S] cluster-binding residues include cysteine 215 and cysteine 218.

It belongs to the Mrp/NBP35 ATP-binding proteins family. NUBP2/CFD1 subfamily. In terms of assembly, heterotetramer of 2 NBP35 and 2 CFD1 chains. The cofactor is [4Fe-4S] cluster.

The protein resides in the cytoplasm. Its function is as follows. Component of the cytosolic iron-sulfur (Fe/S) protein assembly (CIA) machinery. Required for maturation of extramitochondrial Fe-S proteins. The NBP35-CFD1 heterotetramer forms a Fe-S scaffold complex, mediating the de novo assembly of an Fe-S cluster and its transfer to target apoproteins. Required for biogenesis and export of both ribosomal subunits, which may reflect a role in assembly of the Fe/S clusters in RLI1, a protein which performs rRNA processing and ribosome export. This chain is Cytosolic Fe-S cluster assembly factor CFD1, found in Debaryomyces hansenii (strain ATCC 36239 / CBS 767 / BCRC 21394 / JCM 1990 / NBRC 0083 / IGC 2968) (Yeast).